The chain runs to 310 residues: Porphobilinogen deaminase (310 aa).

Cys242 carries the S-(dipyrrolylmethanemethyl)cysteine modification.

The protein belongs to the HMBS family. In terms of assembly, monomer. The cofactor is dipyrromethane.

It catalyses the reaction 4 porphobilinogen + H2O = hydroxymethylbilane + 4 NH4(+). Its pathway is porphyrin-containing compound metabolism; protoporphyrin-IX biosynthesis; coproporphyrinogen-III from 5-aminolevulinate: step 2/4. Functionally, tetrapolymerization of the monopyrrole PBG into the hydroxymethylbilane pre-uroporphyrinogen in several discrete steps. This Shewanella baltica (strain OS195) protein is Porphobilinogen deaminase.